We begin with the raw amino-acid sequence, 349 residues long: Cbb3-type cytochrome c oxidase subunit CcoP (349 aa).

Residues M1–R67 form a disordered region. Residues M1–T96 lie on the Cytoplasmic side of the membrane. A compositionally biased stretch (basic and acidic residues) spans N16 to K30. The chain crosses the membrane as a helical span at residues F97–V117. The Periplasmic segment spans residues N118–E349. 2 Cytochrome c domains span residues Y168–G258 and A265–G346. 8 residues coordinate heme c: C181, C184, H185, M233, C278, C281, H282, and M323.

Belongs to the CcoP / FixP family. Component of the cbb3-type cytochrome c oxidase at least composed of CcoN, CcoO, CcoQ and CcoP. Heme c is required as a cofactor.

It is found in the cell inner membrane. Its pathway is energy metabolism; oxidative phosphorylation. Its function is as follows. C-type cytochrome. Part of the cbb3-type cytochrome c oxidase complex. CcoP subunit is required for transferring electrons from donor cytochrome c via its heme groups to CcoO subunit. From there, electrons are shuttled to the catalytic binuclear center of CcoN subunit where oxygen reduction takes place. The complex also functions as a proton pump. The protein is Cbb3-type cytochrome c oxidase subunit CcoP of Paracoccus denitrificans (strain Pd 1222).